Here is a 352-residue protein sequence, read N- to C-terminus: MESAIDTHLKCPRTLSRRVPEEYQPPFPMWVARADEQLQQVVMGYLGVQYRGEAQREAALQAMRHIVSSFSLPDGPQTHDLTHHTDSSGFDNLMVVGYWKDPAAHCRWLRSAEVNDWWTSQDRLGEGLGYFREISAPRAEQFETLYAFQDNLPGVGAVMDSTSGEIEEHGYWGSMRDRFPISQTDWMKPTNELQVVAGDPAKGGRVVIMGHDNIALIRSGQDWADAEAEERSLYLDEILPTLQDGMDFLRDNGQPLGCYSNRFVRNIDLDGNFLDVSYNIGHWRSLEKLERWAESHPTHLRIFVTFFRVAAGLKKLRLYHEVSVSDAKSQVFEYINCHPHTGMLRDAVVAPT.

S219 is an an aliphatic aldoxime binding site. H299 provides a ligand contact to heme b. H320 serves as a coordination point for an aliphatic aldoxime. H320 is a catalytic residue.

This sequence belongs to the heme-containing dehydratase family. In terms of assembly, homodimer. Heme b is required as a cofactor. The cofactor is Ca(2+).

It catalyses the reaction an aliphatic aldoxime = a nitrile + H2O. Active when the heme iron is in the ferrous state. Is very sensitive to AgNO(3), is also inhibited by hydroxylamine and phenylhydrazine, and hardly inhibited by thiol reagents. Not sensitive to chelating agents and serine-modifying reagents. In terms of biological role, catalyzes the dehydration of aldoximes to their corresponding nitrile. Aliphatic aldoximes are more effective substrates than aromatic aldoximes. Shows high activity with butyraldoxime and acetaldoxime, but only weak activity with the aromatic aldoxime pyridine-2-aldoxime. Cannot use benzaldoxime, isonitrosoacetophenone and pyridine-4-aldoxime. Is involved in the metabolism of aldoxime in vivo. The sequence is that of Aliphatic aldoxime dehydratase from Pseudomonas chlororaphis (Pseudomonas aureofaciens).